The primary structure comprises 247 residues: Uracil-DNA glycosylase (247 aa).

Residue D83 is the Proton acceptor of the active site.

This sequence belongs to the uracil-DNA glycosylase (UDG) superfamily. UNG family.

It localises to the cytoplasm. The enzyme catalyses Hydrolyzes single-stranded DNA or mismatched double-stranded DNA and polynucleotides, releasing free uracil.. Excises uracil residues from the DNA which can arise as a result of misincorporation of dUMP residues by DNA polymerase or due to deamination of cytosine. The protein is Uracil-DNA glycosylase of Deinococcus radiodurans (strain ATCC 13939 / DSM 20539 / JCM 16871 / CCUG 27074 / LMG 4051 / NBRC 15346 / NCIMB 9279 / VKM B-1422 / R1).